Here is a 220-residue protein sequence, read N- to C-terminus: MAKNRFNQSWLHDHINDPYVKMAQREGYRARAAYKLKEIDEQDKLIRPGQVIVDLGAAPGSWSQYARNKLAQGKRRDAVREGGIDGTIIALDMLPMEPVADVHFIQGDFREESVLHQLEEVLAGRAVDLVISDMAPNLSGVAVADAARIEHVCDLALEFAQNHLKPDGALLVKCFHGSGYSQIVEKFKHQFKTVAPRKPKASRDKSSETFILGRHLKQPR.

Residues G60, W62, D92, D108, and D133 each contribute to the S-adenosyl-L-methionine site. The active-site Proton acceptor is the K173. The disordered stretch occupies residues 195–220; that stretch reads APRKPKASRDKSSETFILGRHLKQPR.

The protein belongs to the class I-like SAM-binding methyltransferase superfamily. RNA methyltransferase RlmE family.

It is found in the cytoplasm. It catalyses the reaction uridine(2552) in 23S rRNA + S-adenosyl-L-methionine = 2'-O-methyluridine(2552) in 23S rRNA + S-adenosyl-L-homocysteine + H(+). Functionally, specifically methylates the uridine in position 2552 of 23S rRNA at the 2'-O position of the ribose in the fully assembled 50S ribosomal subunit. This Burkholderia pseudomallei (strain 1710b) protein is Ribosomal RNA large subunit methyltransferase E.